Reading from the N-terminus, the 425-residue chain is Serine--tRNA ligase (425 aa).

L-serine is bound at residue 228 to 230 (TAE). 259–261 (RSE) is an ATP binding site. Glu-282 is an L-serine binding site. Residue 346-349 (EIAS) coordinates ATP. L-serine is bound at residue Ser-382.

It belongs to the class-II aminoacyl-tRNA synthetase family. Type-1 seryl-tRNA synthetase subfamily. As to quaternary structure, homodimer. The tRNA molecule binds across the dimer.

The protein localises to the cytoplasm. It catalyses the reaction tRNA(Ser) + L-serine + ATP = L-seryl-tRNA(Ser) + AMP + diphosphate + H(+). The catalysed reaction is tRNA(Sec) + L-serine + ATP = L-seryl-tRNA(Sec) + AMP + diphosphate + H(+). The protein operates within aminoacyl-tRNA biosynthesis; selenocysteinyl-tRNA(Sec) biosynthesis; L-seryl-tRNA(Sec) from L-serine and tRNA(Sec): step 1/1. In terms of biological role, catalyzes the attachment of serine to tRNA(Ser). Is also able to aminoacylate tRNA(Sec) with serine, to form the misacylated tRNA L-seryl-tRNA(Sec), which will be further converted into selenocysteinyl-tRNA(Sec). This chain is Serine--tRNA ligase, found in Rickettsia rickettsii (strain Iowa).